Here is a 155-residue protein sequence, read N- to C-terminus: Ribonuclease H (155 aa).

The RNase H type-1 domain occupies 1–143; sequence MNQVEIYTDG…ADALANRGVD (143 aa). Mg(2+) contacts are provided by aspartate 9, glutamate 47, aspartate 69, and aspartate 135.

This sequence belongs to the RNase H family. As to quaternary structure, monomer. Mg(2+) is required as a cofactor.

It localises to the cytoplasm. It catalyses the reaction Endonucleolytic cleavage to 5'-phosphomonoester.. Functionally, endonuclease that specifically degrades the RNA of RNA-DNA hybrids. This is Ribonuclease H from Verminephrobacter eiseniae (strain EF01-2).